A 337-amino-acid polypeptide reads, in one-letter code: Vegetative-specific protein H5 (337 aa).

Positions 88–90 (HGG) match the Involved in the stabilization of the negatively charged intermediate by the formation of the oxyanion hole motif. Catalysis depends on residues S161, D261, and H291.

This sequence belongs to the 'GDXG' lipolytic enzyme family.

The polypeptide is Vegetative-specific protein H5 (cinB) (Dictyostelium discoideum (Social amoeba)).